The sequence spans 1879 residues: Protein TIC 214 (1879 aa).

6 consecutive transmembrane segments (helical) span residues 18-38, 67-87, 90-110, 127-147, 175-195, and 218-238; these read IINSVVVVGLYYGFLTTFSIG, FITGQLMMFISIYYAPLHLAL, PHTITVLALPYLLFHFFWNNH, LSIQCVFLNNLIFQLFNHFIL, VGWLIGHILFMKWVGLVLVWI, and IFSILLFITCVYYLGRIPSPI. The segment at 243-291 is disordered; the sequence is LKETEERGESEEERDVEKTSETKGTKQEQEGSTEEDPSPSLFSEEKEDP. Residues 257 to 271 show a composition bias toward basic and acidic residues; that stretch reads DVEKTSETKGTKQEQ.

Belongs to the TIC214 family. Part of the Tic complex.

Its subcellular location is the plastid. The protein localises to the chloroplast inner membrane. Its function is as follows. Involved in protein precursor import into chloroplasts. May be part of an intermediate translocation complex acting as a protein-conducting channel at the inner envelope. This chain is Protein TIC 214, found in Morus indica (Mulberry).